The sequence spans 116 residues: Protein Wnt-5b (116 aa).

Residue S1 is the site of O-palmitoleoyl serine; by PORCN attachment. N-linked (GlcNAc...) asparagine glycosylation is found at N69 and N83. A disulfide bridge connects residues C82 and C97.

This sequence belongs to the Wnt family. Palmitoleoylation is required for efficient binding to frizzled receptors. Depalmitoleoylation leads to Wnt signaling pathway inhibition.

Its subcellular location is the secreted. The protein resides in the extracellular space. It is found in the extracellular matrix. Functionally, ligand for members of the frizzled family of seven transmembrane receptors. Probable developmental protein. May be a signaling molecule which affects the development of discrete regions of tissues. Is likely to signal over only few cell diameters. The sequence is that of Protein Wnt-5b (WNT-5B) from Alopias vulpinus (Common thresher shark).